Here is a 923-residue protein sequence, read N- to C-terminus: DNA gyrase subunit A (923 aa).

Positions Leu34–Leu534 constitute a Topo IIA-type catalytic domain. Tyr122 (O-(5'-phospho-DNA)-tyrosine intermediate) is an active-site residue. A GyrA-box motif is present at residues Gln561 to Gly567. The tract at residues Glu881–Glu923 is disordered. 2 stretches are compositionally biased toward acidic residues: residues Gly888–Ala901 and Ala908–Glu923.

This sequence belongs to the type II topoisomerase GyrA/ParC subunit family. Heterotetramer, composed of two GyrA and two GyrB chains. In the heterotetramer, GyrA contains the active site tyrosine that forms a transient covalent intermediate with DNA, while GyrB binds cofactors and catalyzes ATP hydrolysis.

Its subcellular location is the cytoplasm. It catalyses the reaction ATP-dependent breakage, passage and rejoining of double-stranded DNA.. A type II topoisomerase that negatively supercoils closed circular double-stranded (ds) DNA in an ATP-dependent manner to modulate DNA topology and maintain chromosomes in an underwound state. Negative supercoiling favors strand separation, and DNA replication, transcription, recombination and repair, all of which involve strand separation. Also able to catalyze the interconversion of other topological isomers of dsDNA rings, including catenanes and knotted rings. Type II topoisomerases break and join 2 DNA strands simultaneously in an ATP-dependent manner. This Pseudomonas aeruginosa (strain ATCC 15692 / DSM 22644 / CIP 104116 / JCM 14847 / LMG 12228 / 1C / PRS 101 / PAO1) protein is DNA gyrase subunit A.